Reading from the N-terminus, the 210-residue chain is Orotate phosphoribosyltransferase (210 aa).

5-phospho-alpha-D-ribose 1-diphosphate-binding positions include R96, K100, H102, and 122 to 130 (EDLISTGGS). S126 lines the orotate pocket.

It belongs to the purine/pyrimidine phosphoribosyltransferase family. PyrE subfamily. In terms of assembly, homodimer. Requires Mg(2+) as cofactor.

The catalysed reaction is orotidine 5'-phosphate + diphosphate = orotate + 5-phospho-alpha-D-ribose 1-diphosphate. Its pathway is pyrimidine metabolism; UMP biosynthesis via de novo pathway; UMP from orotate: step 1/2. Catalyzes the transfer of a ribosyl phosphate group from 5-phosphoribose 1-diphosphate to orotate, leading to the formation of orotidine monophosphate (OMP). The sequence is that of Orotate phosphoribosyltransferase (pyrE) from Streptococcus pneumoniae serotype 19F (strain G54).